We begin with the raw amino-acid sequence, 393 residues long: Sugar efflux transporter A (393 aa).

The next 12 membrane-spanning stretches (helical) occupy residues 22-42 (VIAFLTGIAGALQLPTLSLFL), 51-71 (FMVGLFYTGSAVIGIVVSQIL), 82-102 (KTLILQCCLLGALACLLYAWN), 107-127 (VLLFIGVLLSSFGSTANPQLF), 152-172 (ISLSWVIGPPVAFALALGFGF), 174-194 (AMYLTAAVVFVLCGLLVWLLL), 219-239 (LLLFTACTLMWTCNGIYLINM), 253-273 (LAGVMMGTAAGLEIPVMLLAG), 287-307 (LAVIAGLIFYTGLTLLNGSWA), 308-328 (LLALQLLNAIFIGILAGMGML), 344-364 (LFTNTTRVGWIISGSLAGIVA), and 366-386 (VWSYHAGFVIAIAMLAGAAVC).

Belongs to the major facilitator superfamily. Set transporter family.

It localises to the cell inner membrane. In terms of biological role, involved in the efflux of sugars. The physiological role may be the reduction of the intracellular concentration of toxic sugars or sugar metabolites. Transports IPTG, lactose and arabinose. This is Sugar efflux transporter A (sotA) from Dickeya chrysanthemi (Pectobacterium chrysanthemi).